Reading from the N-terminus, the 124-residue chain is Small ribosomal subunit protein uS12 (124 aa).

Residue Asp-89 is modified to 3-methylthioaspartic acid.

It belongs to the universal ribosomal protein uS12 family. Part of the 30S ribosomal subunit. Contacts proteins S8 and S17. May interact with IF1 in the 30S initiation complex.

Its function is as follows. With S4 and S5 plays an important role in translational accuracy. Interacts with and stabilizes bases of the 16S rRNA that are involved in tRNA selection in the A site and with the mRNA backbone. Located at the interface of the 30S and 50S subunits, it traverses the body of the 30S subunit contacting proteins on the other side and probably holding the rRNA structure together. The combined cluster of proteins S8, S12 and S17 appears to hold together the shoulder and platform of the 30S subunit. In Psychrobacter arcticus (strain DSM 17307 / VKM B-2377 / 273-4), this protein is Small ribosomal subunit protein uS12.